Reading from the N-terminus, the 81-residue chain is Xenopsin peptides (81 aa).

The N-terminal stretch at 1–20 (MYKGIFLCVLLAVICANSLA) is a signal peptide. The propeptide occupies 21-37 (TPSSDADEDNDEVERYV). The propeptide at 65–73 (EAMLRSAEA) is removed in mature form by a dipeptidylpeptidase.

This sequence belongs to the gastrin/cholecystokinin family. Magainin subfamily. As to expression, XPF is synthesized in the stomach and stored in a novel granular multinucleated cell in the gastric mucosa, it is stored as active, processed peptides in large granules within the granular gland secretions of the skin.

The protein localises to the secreted. Its function is as follows. Xenopsin is a neurotensin-like octapeptide. XPF has antimicrobial activity. In Xenopus laevis (African clawed frog), this protein is Xenopsin peptides.